We begin with the raw amino-acid sequence, 76 residues long: uncharacterized protein (76 aa).

The HTH cro/C1-type domain maps to 15-69; it reads VRIVRKEQNLRQDELAGVAGVGLRFIVDLEAGKPTAQIGKVLQVLQTLGCSIDIL. The segment at residues 26–45 is a DNA-binding region (H-T-H motif); that stretch reads QDELAGVAGVGLRFIVDLEA.

This is an uncharacterized protein from Sinorhizobium fredii (strain NBRC 101917 / NGR234).